Reading from the N-terminus, the 80-residue chain is Translation initiation factor IF-1 (80 aa).

The region spanning 6–80 (RKQEHEKERG…LTRGRIVYRL (75 aa)) is the S1-like domain.

It belongs to the IF-1 family. As to quaternary structure, component of the 30S ribosomal translation pre-initiation complex which assembles on the 30S ribosome in the order IF-2 and IF-3, IF-1 and N-formylmethionyl-tRNA(fMet); mRNA recruitment can occur at any time during PIC assembly.

It localises to the cytoplasm. Functionally, one of the essential components for the initiation of protein synthesis. Stabilizes the binding of IF-2 and IF-3 on the 30S subunit to which N-formylmethionyl-tRNA(fMet) subsequently binds. Helps modulate mRNA selection, yielding the 30S pre-initiation complex (PIC). Upon addition of the 50S ribosomal subunit IF-1, IF-2 and IF-3 are released leaving the mature 70S translation initiation complex. This is Translation initiation factor IF-1 from Aquifex aeolicus (strain VF5).